The following is a 510-amino-acid chain: Maturase K (510 aa).

The protein belongs to the intron maturase 2 family. MatK subfamily.

Its subcellular location is the plastid. The protein localises to the chloroplast. In terms of biological role, usually encoded in the trnK tRNA gene intron. Probably assists in splicing its own and other chloroplast group II introns. This is Maturase K from Taxus cuspidata (Japanese yew).